Reading from the N-terminus, the 441-residue chain is Dihydroorotase (441 aa).

Zn(2+) is bound by residues His-77 and His-79. Substrate-binding positions include 79 to 81 and Asn-111; that span reads HFR. Positions 167, 194, and 248 each coordinate Zn(2+). Position 294 (Asn-294) interacts with substrate. Residue Asp-321 coordinates Zn(2+). Residue Asp-321 is part of the active site. Residues His-325 and 339–340 each bind substrate; that span reads FG.

This sequence belongs to the metallo-dependent hydrolases superfamily. DHOase family. Class I DHOase subfamily. Requires Zn(2+) as cofactor.

It catalyses the reaction (S)-dihydroorotate + H2O = N-carbamoyl-L-aspartate + H(+). It functions in the pathway pyrimidine metabolism; UMP biosynthesis via de novo pathway; (S)-dihydroorotate from bicarbonate: step 3/3. In terms of biological role, catalyzes the reversible cyclization of carbamoyl aspartate to dihydroorotate. This Wolbachia sp. subsp. Drosophila simulans (strain wRi) protein is Dihydroorotase.